The following is a 46-amino-acid chain: Protein PsbN (46 aa).

The chain crosses the membrane as a helical span at residues 7–27 (GLSIAITFAVILLALTGFSIY).

It belongs to the PsbN family.

It localises to the cellular thylakoid membrane. Functionally, may play a role in photosystem I and II biogenesis. The chain is Protein PsbN from Synechococcus elongatus (strain ATCC 33912 / PCC 7942 / FACHB-805) (Anacystis nidulans R2).